Consider the following 423-residue polypeptide: Protein MANNAN SYNTHESIS-RELATED 2 (423 aa).

Over methionine 1 to arginine 6 the chain is Cytoplasmic. The chain crosses the membrane as a helical; Signal-anchor for type II membrane protein span at residues glutamine 7–histidine 26. Residues arginine 27 to cysteine 423 are Lumenal-facing. Aspartate 264–arginine 266 serves as a coordination point for substrate.

This sequence belongs to the glycosyltransferase GT106 family. In terms of tissue distribution, widely expressed.

It localises to the golgi apparatus membrane. Its pathway is glycan biosynthesis. Functionally, glycosyltransferase involved in mannan biosynthesis. The chain is Protein MANNAN SYNTHESIS-RELATED 2 from Arabidopsis thaliana (Mouse-ear cress).